The chain runs to 103 residues: Carboxysome shell protein CsoS1 (103 aa).

The region spanning 9–94 (ALGMIETRGL…PHREVEPALG (86 aa)) is the BMC domain.

It belongs to the bacterial microcompartments protein family. CsoS1 subfamily. In terms of assembly, homohexamer with a small central pore. Forms a CsoS2-CsoS1-RuBisCO complex.

The protein localises to the carboxysome. Functionally, one of the shell proteins of the carboxysome, a polyhedral inclusion where RuBisCO (ribulose bisphosphate carboxylase, ccbL-ccbS) is sequestered. Assembles into hexamers which make sheets that form the facets of the polyhedral carboxysome. This is Carboxysome shell protein CsoS1 from Prochlorococcus marinus (strain MIT 9313).